Reading from the N-terminus, the 621-residue chain is TOX high mobility group box family member 4 (621 aa).

2 disordered regions span residues 153–227 (LGLS…QKPV) and 305–333 (LDPAPPSQTPSPPPMATVDPASPAPASIE). Phosphothreonine is present on T176. Phosphoserine is present on residues S178, S181, and S182. Residues 183 to 193 (LHEDGVEDFRR) show a composition bias toward basic and acidic residues. Over residues 208–218 (KQKAPKKRKKK) the composition is skewed to basic residues. Positions 213–218 (KKRKKK) match the Nuclear localization signal motif. The segment at residues 223–291 (PQKPVSAYAL…EYLKALAAYK (69 aa)) is a DNA-binding region (HMG box). The segment covering 307–319 (PAPPSQTPSPPPM) has biased composition (pro residues). T313 is modified (phosphothreonine). Phosphoserine is present on S315. The segment covering 320 to 333 (ATVDPASPAPASIE) has biased composition (low complexity). R481 is subject to Asymmetric dimethylarginine. A disordered region spans residues 510–529 (PTVESSPERPMNNSPEAHTV). 6 positions are modified to phosphoserine: S533, S550, S552, S560, S562, and S567.

As to quaternary structure, component of the PNUTS-PP1 phosphatase complex, composed of PPP1R10/PNUTS, TOX4, WDR82 and PPP1CA or PPP1CB or PPP1CC. Interacts with PPP1R10/PNUTS. Interacts with FOXO1 and CREB1 (increased by cAMP); FOXO1 and CREB1 are required for full induction of TOX4-dependent activity and the interactions are inhibited by insulin.

It localises to the nucleus. It is found in the chromosome. Its activity is regulated as follows. In liver, recruited to target gene promoters following treatment with dexamethasone and cAMP. Binding is decreased in presence of insulin. In terms of biological role, transcription factor that modulates cell fate reprogramming from the somatic state to the pluripotent and neuronal fate. In liver, controls the expression of hormone-regulated gluconeogenic genes such as G6PC1 and PCK1. This regulation is independent of the insulin receptor activation. Also acts as a regulatory component of protein phosphatase 1 (PP1) complexes. Component of the PNUTS-PP1 protein phosphatase complex, a PP1 complex that regulates RNA polymerase II transcription pause-release. PNUTS-PP1 also plays a role in the control of chromatin structure and cell cycle progression during the transition from mitosis into interphase. This Pongo abelii (Sumatran orangutan) protein is TOX high mobility group box family member 4 (TOX4).